An 82-amino-acid polypeptide reads, in one-letter code: Large ribosomal subunit protein bL31B (82 aa).

The protein belongs to the bacterial ribosomal protein bL31 family. Type B subfamily. Part of the 50S ribosomal subunit.

In Dichelobacter nodosus (strain VCS1703A), this protein is Large ribosomal subunit protein bL31B.